The sequence spans 720 residues: Glutaryl-7-aminocephalosporanic-acid acylase (720 aa).

The first 29 residues, 1–29 (MLRVLHRAASALVMATVIGLAPGVAFALA), serve as a signal peptide directing secretion. The propeptide at 188 to 198 (EGDPPDLADQG) is spacer peptide. Ser-199 acts as the Nucleophile in catalysis. Catalysis depends on residues His-221 and Glu-653.

Belongs to the peptidase S45 family. In terms of assembly, heterodimer of a small subunit and a large subunit processed from the same precursor.

It localises to the periplasm. The enzyme catalyses (7R)-7-(4-carboxybutanamido)cephalosporanate + H2O = (7R)-7-aminocephalosporanate + glutarate. In terms of biological role, catalyzes the deacylation of 7 beta-(4-carboxybutanamido)cephalosporanic acid (glutaryl-7-aminocephalosporanic acid or GL-7-ACA) to 7-aminocephalosporanic acid (7-ACA). Cannot efficiently use cephalosporin C (CPC), penicillin G, or ampicillin as substrates. This is Glutaryl-7-aminocephalosporanic-acid acylase from Brevundimonas diminuta (Pseudomonas diminuta).